Reading from the N-terminus, the 296-residue chain is MSDKQINLVIVTGMSGAGKTVAIQSFEDLGYFTVDNMPPALVPKFLELLERTNETQKVALVVDMRSRRFFKEINSILDHIELNANLKLRILFLDATDSELVSRYKETRRSHPLAADGRVLDGIRRERELLVPLKSMSQHVVNTTDLTPRQLRKVISDQFSSESDQASFRIEVMSFGFKYGLPLDADLVFDVRFLPNPYYQVALREQTGLDQAVFDYVMTHQESEAFYNHLLDLIVPILPAYQKEGKSVLTIAIGCTGGQHRSVAFAHRLAQDLTADWPLHESHRDINRRKETVNRS.

Position 13 to 20 (Gly13 to Thr20) interacts with ATP. Asp63–Ser66 provides a ligand contact to GTP.

This sequence belongs to the RapZ-like family.

Functionally, displays ATPase and GTPase activities. The chain is Nucleotide-binding protein SZO_12220 from Streptococcus equi subsp. zooepidemicus (strain H70).